Here is a 474-residue protein sequence, read N- to C-terminus: Synaptotagmin-17 (474 aa).

Positions Trp60–Pro117 are disordered. Residues Ser96–Pro117 are compositionally biased toward low complexity. Phosphoserine occurs at positions 118 and 119. 2 consecutive C2 domains span residues Gln184–Lys310 and Glu321–His455.

Belongs to the synaptotagmin family. Expressed in brain and kidney.

Its subcellular location is the membrane. Its function is as follows. Plays a role in dendrite formation by melanocytes. This Rattus norvegicus (Rat) protein is Synaptotagmin-17 (Syt17).